The primary structure comprises 643 residues: Threonine--tRNA ligase (643 aa).

Residues 1-61 (MPIITLPDGS…EQDATLEIIT (61 aa)) form the TGS domain. A catalytic region spans residues 243-534 (DHRKIGKALD…ITEEYAGFFP (292 aa)). Cys334, His385, and His511 together coordinate Zn(2+).

This sequence belongs to the class-II aminoacyl-tRNA synthetase family. In terms of assembly, homodimer. Zn(2+) is required as a cofactor.

The protein resides in the cytoplasm. The enzyme catalyses tRNA(Thr) + L-threonine + ATP = L-threonyl-tRNA(Thr) + AMP + diphosphate + H(+). In terms of biological role, catalyzes the attachment of threonine to tRNA(Thr) in a two-step reaction: L-threonine is first activated by ATP to form Thr-AMP and then transferred to the acceptor end of tRNA(Thr). Also edits incorrectly charged L-seryl-tRNA(Thr). This Haemophilus influenzae (strain PittGG) protein is Threonine--tRNA ligase.